The chain runs to 249 residues: Uridylate kinase (249 aa).

13–16 is an ATP binding site; the sequence is KLSG. Gly-55 contacts UMP. 2 residues coordinate ATP: Gly-56 and Arg-60. Residues Asp-75 and 136 to 143 contribute to the UMP site; that span reads IGNPFFTT. Residues Thr-163, Phe-169, and Asp-172 each coordinate ATP.

Belongs to the UMP kinase family. As to quaternary structure, homohexamer.

Its subcellular location is the cytoplasm. It catalyses the reaction UMP + ATP = UDP + ADP. Its pathway is pyrimidine metabolism; CTP biosynthesis via de novo pathway; UDP from UMP (UMPK route): step 1/1. Its activity is regulated as follows. Inhibited by UTP. Its function is as follows. Catalyzes the reversible phosphorylation of UMP to UDP. The polypeptide is Uridylate kinase (Baumannia cicadellinicola subsp. Homalodisca coagulata).